The following is a 161-amino-acid chain: Large ribosomal subunit protein uL29c (161 aa).

The transit peptide at M1–M61 directs the protein to the chloroplast.

This sequence belongs to the universal ribosomal protein uL29 family. As to quaternary structure, part of the 50S ribosomal subunit.

The protein resides in the plastid. It is found in the chloroplast. In Zea mays (Maize), this protein is Large ribosomal subunit protein uL29c (RPL29).